The following is a 149-amino-acid chain: Deoxyuridine 5'-triphosphate nucleotidohydrolase (149 aa).

Residues 68–70 (RSG), N81, 85–87 (TVD), and K95 contribute to the substrate site.

This sequence belongs to the dUTPase family. The cofactor is Mg(2+).

The catalysed reaction is dUTP + H2O = dUMP + diphosphate + H(+). It functions in the pathway pyrimidine metabolism; dUMP biosynthesis; dUMP from dCTP (dUTP route): step 2/2. Functionally, this enzyme is involved in nucleotide metabolism: it produces dUMP, the immediate precursor of thymidine nucleotides and it decreases the intracellular concentration of dUTP so that uracil cannot be incorporated into DNA. In Wolinella succinogenes (strain ATCC 29543 / DSM 1740 / CCUG 13145 / JCM 31913 / LMG 7466 / NCTC 11488 / FDC 602W) (Vibrio succinogenes), this protein is Deoxyuridine 5'-triphosphate nucleotidohydrolase.